The primary structure comprises 410 residues: Dual-specificity RNA methyltransferase RlmN (410 aa).

Residue glutamate 123 is the Proton acceptor of the active site. The region spanning glutamate 129–leucine 378 is the Radical SAM core domain. A disulfide bridge links cysteine 136 with cysteine 381. Residues cysteine 143, cysteine 147, and cysteine 150 each coordinate [4Fe-4S] cluster. Residues glycine 207–glutamate 208, serine 239, serine 261–histidine 263, and asparagine 338 contribute to the S-adenosyl-L-methionine site. Cysteine 381 (S-methylcysteine intermediate) is an active-site residue.

The protein belongs to the radical SAM superfamily. RlmN family. It depends on [4Fe-4S] cluster as a cofactor.

The protein localises to the cytoplasm. It carries out the reaction adenosine(2503) in 23S rRNA + 2 reduced [2Fe-2S]-[ferredoxin] + 2 S-adenosyl-L-methionine = 2-methyladenosine(2503) in 23S rRNA + 5'-deoxyadenosine + L-methionine + 2 oxidized [2Fe-2S]-[ferredoxin] + S-adenosyl-L-homocysteine. The catalysed reaction is adenosine(37) in tRNA + 2 reduced [2Fe-2S]-[ferredoxin] + 2 S-adenosyl-L-methionine = 2-methyladenosine(37) in tRNA + 5'-deoxyadenosine + L-methionine + 2 oxidized [2Fe-2S]-[ferredoxin] + S-adenosyl-L-homocysteine. Specifically methylates position 2 of adenine 2503 in 23S rRNA and position 2 of adenine 37 in tRNAs. m2A2503 modification seems to play a crucial role in the proofreading step occurring at the peptidyl transferase center and thus would serve to optimize ribosomal fidelity. The protein is Dual-specificity RNA methyltransferase RlmN of Mesorhizobium japonicum (strain LMG 29417 / CECT 9101 / MAFF 303099) (Mesorhizobium loti (strain MAFF 303099)).